Consider the following 128-residue polypeptide: Large ribosomal subunit protein bL17 (128 aa).

This sequence belongs to the bacterial ribosomal protein bL17 family. In terms of assembly, part of the 50S ribosomal subunit. Contacts protein L32.

This Streptococcus pyogenes serotype M49 (strain NZ131) protein is Large ribosomal subunit protein bL17.